The primary structure comprises 597 residues: Uptake hydrogenase large subunit (597 aa).

Ni(2+) contacts are provided by Cys-75, Cys-78, Cys-576, and Cys-579.

It belongs to the [NiFe]/[NiFeSe] hydrogenase large subunit family. As to quaternary structure, heterodimer of a large and a small subunit. Ni(2+) is required as a cofactor.

Its subcellular location is the cell membrane. The enzyme catalyses H2 + A = AH2. Its function is as follows. This enzyme recycles the H(2) produced by nitrogenase to increase the production of ATP and to protect nitrogenase against inhibition or damage by O(2) under carbon- or phosphate-limited conditions. The polypeptide is Uptake hydrogenase large subunit (hupB) (Rhodobacter capsulatus (Rhodopseudomonas capsulata)).